Reading from the N-terminus, the 234-residue chain is Sugar fermentation stimulation protein A (234 aa).

Positions 201-220 form a DNA-binding region, H-T-H motif; the sequence is LLSEAQQRGVEILAYKAELS.

The protein belongs to the SfsA family.

Its function is as follows. Binds to DNA non-specifically. Could be a regulatory factor involved in maltose metabolism. The protein is Sugar fermentation stimulation protein A of Escherichia coli (strain SMS-3-5 / SECEC).